The sequence spans 142 residues: Large ribosomal subunit protein uL13 (142 aa).

This sequence belongs to the universal ribosomal protein uL13 family. As to quaternary structure, part of the 50S ribosomal subunit.

This protein is one of the early assembly proteins of the 50S ribosomal subunit, although it is not seen to bind rRNA by itself. It is important during the early stages of 50S assembly. The polypeptide is Large ribosomal subunit protein uL13 (Azoarcus sp. (strain BH72)).